Consider the following 475-residue polypeptide: Ribulose bisphosphate carboxylase large chain (475 aa).

Positions 1–2 (MS) are excised as a propeptide. At Pro-3 the chain carries N-acetylproline. Residue Lys-14 is modified to N6,N6,N6-trimethyllysine. Substrate-binding residues include Asn-123 and Thr-173. Catalysis depends on Lys-175, which acts as the Proton acceptor. Lys-177 contributes to the substrate binding site. The Mg(2+) site is built by Lys-201, Asp-203, and Glu-204. Lys-201 bears the N6-carboxylysine mark. Residue His-294 is the Proton acceptor of the active site. The substrate site is built by Arg-295, His-327, and Ser-379.

The protein belongs to the RuBisCO large chain family. Type I subfamily. As to quaternary structure, heterohexadecamer of 8 large chains and 8 small chains; disulfide-linked. The disulfide link is formed within the large subunit homodimers. Requires Mg(2+) as cofactor. In terms of processing, the disulfide bond which can form in the large chain dimeric partners within the hexadecamer appears to be associated with oxidative stress and protein turnover.

The protein localises to the plastid. It localises to the chloroplast. It catalyses the reaction 2 (2R)-3-phosphoglycerate + 2 H(+) = D-ribulose 1,5-bisphosphate + CO2 + H2O. The enzyme catalyses D-ribulose 1,5-bisphosphate + O2 = 2-phosphoglycolate + (2R)-3-phosphoglycerate + 2 H(+). Functionally, ruBisCO catalyzes two reactions: the carboxylation of D-ribulose 1,5-bisphosphate, the primary event in carbon dioxide fixation, as well as the oxidative fragmentation of the pentose substrate in the photorespiration process. Both reactions occur simultaneously and in competition at the same active site. The sequence is that of Ribulose bisphosphate carboxylase large chain from Stellaria media (Common chickweed).